Here is a 319-residue protein sequence, read N- to C-terminus: ATP-dependent 6-phosphofructokinase (319 aa).

Glycine 11 is a binding site for ATP. An ADP-binding site is contributed by 21 to 25; the sequence is RAVVR. Residues 72–73 and 102–105 each bind ATP; these read RC and GDGS. Aspartate 103 is a Mg(2+) binding site. Substrate is bound at residue 125–127; the sequence is TID. The active-site Proton acceptor is aspartate 127. Arginine 154 serves as a coordination point for ADP. Substrate is bound by residues arginine 162 and 169–171; that span reads MGR. Residues 185 to 187, arginine 211, and 213 to 215 contribute to the ADP site; these read GAE and KKH. Residues glutamate 222, arginine 243, and 249-252 each bind substrate; that span reads HVQR.

The protein belongs to the phosphofructokinase type A (PFKA) family. ATP-dependent PFK group I subfamily. Prokaryotic clade 'B1' sub-subfamily. Homotetramer. Mg(2+) is required as a cofactor.

It is found in the cytoplasm. It carries out the reaction beta-D-fructose 6-phosphate + ATP = beta-D-fructose 1,6-bisphosphate + ADP + H(+). Its pathway is carbohydrate degradation; glycolysis; D-glyceraldehyde 3-phosphate and glycerone phosphate from D-glucose: step 3/4. Allosterically activated by ADP and other diphosphonucleosides, and allosterically inhibited by phosphoenolpyruvate. Its function is as follows. Catalyzes the phosphorylation of D-fructose 6-phosphate to fructose 1,6-bisphosphate by ATP, the first committing step of glycolysis. In Bacillus cereus (strain ATCC 14579 / DSM 31 / CCUG 7414 / JCM 2152 / NBRC 15305 / NCIMB 9373 / NCTC 2599 / NRRL B-3711), this protein is ATP-dependent 6-phosphofructokinase.